Reading from the N-terminus, the 182-residue chain is Ribosome-recycling factor (182 aa).

It belongs to the RRF family.

Its subcellular location is the cytoplasm. Functionally, responsible for the release of ribosomes from messenger RNA at the termination of protein biosynthesis. May increase the efficiency of translation by recycling ribosomes from one round of translation to another. The protein is Ribosome-recycling factor of Synechococcus sp. (strain WH7803).